Reading from the N-terminus, the 473-residue chain is Eukaryotic translation initiation factor 2 subunit gamma (473 aa).

The tr-type G domain occupies 40–250; sequence QATINIGTIG…AICNIAPPNY (211 aa). The interval 49–56 is G1; it reads GHVAHGKS. Position 52-57 (52-57) interacts with GTP; that stretch reads AHGKSS. Residues 77–81 are G2; sequence NITIK. A G3 region spans residues 135–138; it reads DCPG. Residues 193–196 and 228–230 contribute to the GTP site; these read NKMD and SAQ. Residues 193-196 are G4; that stretch reads NKMD. Residues 228 to 230 are G5; that stretch reads SAQ. The segment at 458-470 is interacts with CDC123; sequence GKVRSGGTLCEVV.

The protein belongs to the TRAFAC class translation factor GTPase superfamily. Classic translation factor GTPase family. EIF2G subfamily. In terms of assembly, eukaryotic translation initiation factor 2 eIF2 is a heterotrimeric complex composed of an alpha, a beta and a gamma subunit. The factors eIF-1, eIF-2, eIF-3, TIF5/eIF-5 and methionyl-tRNAi form a multifactor complex (MFC) that may bind to the 40S ribosome.

The protein resides in the cytoplasm. It is found in the cytosol. The catalysed reaction is GTP + H2O = GDP + phosphate + H(+). Functionally, as a subunit of eukaryotic initiation factor 2 eIF2, involved in the early steps of protein synthesis. In the presence of GTP, eIF-2 forms a ternary complex with initiator tRNA Met-tRNAi and then recruits the 40S ribosomal complex and initiation factors eIF-1, eIF-1A and eIF-3 to form the 43S pre-initiation complex (43S PIC), a step that determines the rate of protein translation. The 43S PIC binds to mRNA and scans downstream to the initiation codon, where it forms a 48S initiation complex by codon-anticodon base pairing. This leads to the displacement of eIF-1 to allow GTPase-activating protein (GAP) eIF-5-mediated hydrolysis of eIF2-bound GTP. Hydrolysis of GTP and release of Pi, which makes GTP hydrolysis irreversible, causes the release of the eIF-2-GDP binary complex from the 40S subunit, an event that is essential for the subsequent joining of the 60S ribosomal subunit to form an elongation-competent 80S ribosome. In order for eIF-2 to recycle and catalyze another round of initiation, the GDP bound to eIF-2 must be exchanged with GTP by way of a reaction catalyzed by GDP-GTP exchange factor (GEF) eIF-2B. The chain is Eukaryotic translation initiation factor 2 subunit gamma from Cryptococcus neoformans var. grubii serotype A (strain H99 / ATCC 208821 / CBS 10515 / FGSC 9487) (Filobasidiella neoformans var. grubii).